We begin with the raw amino-acid sequence, 193 residues long: dTTP/UTP pyrophosphatase (193 aa).

The active-site Proton acceptor is the Asp77.

It belongs to the Maf family. YhdE subfamily. A divalent metal cation is required as a cofactor.

Its subcellular location is the cytoplasm. The catalysed reaction is dTTP + H2O = dTMP + diphosphate + H(+). The enzyme catalyses UTP + H2O = UMP + diphosphate + H(+). In terms of biological role, nucleoside triphosphate pyrophosphatase that hydrolyzes dTTP and UTP. May have a dual role in cell division arrest and in preventing the incorporation of modified nucleotides into cellular nucleic acids. In Bacteroides fragilis (strain ATCC 25285 / DSM 2151 / CCUG 4856 / JCM 11019 / LMG 10263 / NCTC 9343 / Onslow / VPI 2553 / EN-2), this protein is dTTP/UTP pyrophosphatase.